Reading from the N-terminus, the 433-residue chain is Adenylyltransferase and sulfurtransferase UBA4 (433 aa).

Residues Gly70, Asp91, 98 to 102 (SNLHR), Lys115, and 159 to 160 (DT) contribute to the ATP site. Residues Cys201 and Cys204 each coordinate Zn(2+). Cys218 (glycyl thioester intermediate; for adenylyltransferase activity) is an active-site residue. Residues Cys279 and Cys282 each coordinate Zn(2+). One can recognise a Rhodanese domain in the interval 332–431 (SGNNKVLLDV…YIDDVDQSIP (100 aa)). Cys390 acts as the Cysteine persulfide intermediate; for sulfurtransferase activity in catalysis.

The protein in the N-terminal section; belongs to the HesA/MoeB/ThiF family. UBA4 subfamily. Zn(2+) serves as cofactor.

The protein localises to the cytoplasm. Its subcellular location is the cytosol. The protein operates within tRNA modification; 5-methoxycarbonylmethyl-2-thiouridine-tRNA biosynthesis. In terms of biological role, plays a central role in 2-thiolation of mcm(5)S(2)U at tRNA wobble positions of cytosolic tRNA(Lys), tRNA(Glu) and tRNA(Gln). Acts by mediating the C-terminal thiocarboxylation of sulfur carrier URM1. Its N-terminus first activates URM1 as acyl-adenylate (-COAMP), then the persulfide sulfur on the catalytic cysteine is transferred to URM1 to form thiocarboxylation (-COSH) of its C-terminus. The reaction probably involves hydrogen sulfide that is generated from the persulfide intermediate and that acts as a nucleophile towards URM1. Subsequently, a transient disulfide bond is formed. Does not use thiosulfate as sulfur donor; NFS1 probably acting as a sulfur donor for thiocarboxylation reactions. Prior mcm(5) tRNA modification by the elongator complex is required for 2-thiolation. May also be involved in protein urmylation. This chain is Adenylyltransferase and sulfurtransferase UBA4, found in Candida glabrata (strain ATCC 2001 / BCRC 20586 / JCM 3761 / NBRC 0622 / NRRL Y-65 / CBS 138) (Yeast).